We begin with the raw amino-acid sequence, 213 residues long: Cytochrome c biogenesis ATP-binding export protein CcmA (213 aa).

Residues 3 to 211 (LTAENLGVRR…QMTGFAGVET (209 aa)) enclose the ABC transporter domain. Residue 35–42 (GRNGSGKS) coordinates ATP.

Belongs to the ABC transporter superfamily. CcmA exporter (TC 3.A.1.107) family. As to quaternary structure, the complex is composed of two ATP-binding proteins (CcmA) and two transmembrane proteins (CcmB).

It localises to the cell inner membrane. The catalysed reaction is heme b(in) + ATP + H2O = heme b(out) + ADP + phosphate + H(+). Part of the ABC transporter complex CcmAB involved in the biogenesis of c-type cytochromes; once thought to export heme, this seems not to be the case, but its exact role is uncertain. Responsible for energy coupling to the transport system. The protein is Cytochrome c biogenesis ATP-binding export protein CcmA of Agrobacterium fabrum (strain C58 / ATCC 33970) (Agrobacterium tumefaciens (strain C58)).